A 323-amino-acid chain; its full sequence is tRNA dimethylallyltransferase (323 aa).

G12–T19 provides a ligand contact to ATP. T14 to T19 lines the substrate pocket. 2 interaction with substrate tRNA regions span residues D37–L40 and Q161–R165.

Belongs to the IPP transferase family. In terms of assembly, monomer. Requires Mg(2+) as cofactor.

It catalyses the reaction adenosine(37) in tRNA + dimethylallyl diphosphate = N(6)-dimethylallyladenosine(37) in tRNA + diphosphate. Catalyzes the transfer of a dimethylallyl group onto the adenine at position 37 in tRNAs that read codons beginning with uridine, leading to the formation of N6-(dimethylallyl)adenosine (i(6)A). The sequence is that of tRNA dimethylallyltransferase from Pseudomonas syringae pv. tomato (strain ATCC BAA-871 / DC3000).